A 239-amino-acid chain; its full sequence is Large ribosomal subunit protein uL1 (239 aa).

It belongs to the universal ribosomal protein uL1 family. Part of the 50S ribosomal subunit.

Functionally, binds directly to 23S rRNA. The L1 stalk is quite mobile in the ribosome, and is involved in E site tRNA release. Protein L1 is also a translational repressor protein, it controls the translation of the L11 operon by binding to its mRNA. This Acidothermus cellulolyticus (strain ATCC 43068 / DSM 8971 / 11B) protein is Large ribosomal subunit protein uL1.